Consider the following 497-residue polypeptide: tRNA (adenine(58)-N(1))-methyltransferase non-catalytic subunit TRM6 (497 aa).

Residues 81 to 103 (LEEPASETKEAGTDNRNIVDDGK) are disordered. The segment at 95-105 (NRNIVDDGKSQ) is substrate. Phosphothreonine is present on T108. Substrate regions lie at residues 146-155 (KYIKKKKKKY) and 176-183 (REPGKINH). The tract at residues 275-354 (MLSSEPKDST…EKQRRQEEQR (80 aa)) is disordered. Acidic residues predominate over residues 289–307 (SNGELEEKEIAEQADEDNI). The segment covering 328 to 354 (PENKEPKEKRSKRDYIQEKQRRQEEQR) has biased composition (basic and acidic residues). Residues R349 and R377 each contribute to the substrate site. Substrate stretches follow at residues 415-423 (RERGGVINL) and 434-441 (QVLPDRSH). A disordered region spans residues 474–497 (TGALDPHKAEEPAAKKQKCMESAS). The span at 478–487 (DPHKAEEPAA) shows a compositional bias: basic and acidic residues.

This sequence belongs to the TRM6/GCD10 family. Heterotetramer; composed of two copies of TRMT6 and two copies of TRMT61A.

It is found in the nucleus. Its function is as follows. Substrate-binding subunit of tRNA (adenine-N(1)-)-methyltransferase, which catalyzes the formation of N(1)-methyladenine at position 58 (m1A58) in initiator methionyl-tRNA. Together with the TRMT61A catalytic subunit, part of a mRNA N(1)-methyltransferase complex that mediates methylation of adenosine residues at the N(1) position of a small subset of mRNAs: N(1) methylation takes place in tRNA T-loop-like structures of mRNAs and is only present at low stoichiometries. The sequence is that of tRNA (adenine(58)-N(1))-methyltransferase non-catalytic subunit TRM6 (Trmt6) from Mus musculus (Mouse).